The following is a 594-amino-acid chain: Adenine deaminase 1 (594 aa).

Belongs to the metallo-dependent hydrolases superfamily. Adenine deaminase family. Mn(2+) serves as cofactor.

The catalysed reaction is adenine + H2O + H(+) = hypoxanthine + NH4(+). The protein is Adenine deaminase 1 of Latilactobacillus sakei subsp. sakei (strain 23K) (Lactobacillus sakei subsp. sakei).